Consider the following 334-residue polypeptide: Trans-O-hydroxybenzylidenepyruvate hydratase-aldolase (334 aa).

It belongs to the DapA family.

It catalyses the reaction (3E)-4-(2-hydroxyphenyl)-2-oxobut-3-enoate + H2O = salicylaldehyde + pyruvate. The protein operates within aromatic compound metabolism; naphthalene degradation. Functionally, involved in the naphthalene upper catabolic pathway. Catalyzes the transformation of trans-O-hydroxybenzylidenepyruvate (THBPA) to salicylaldehyde and pyruvate. The reaction is reversible. The chain is Trans-O-hydroxybenzylidenepyruvate hydratase-aldolase (pahE) from Pseudomonas aeruginosa.